A 219-amino-acid polypeptide reads, in one-letter code: Ras-related protein RABA5d (219 aa).

Serine 2 bears the N-acetylserine mark. A GTP-binding site is contributed by glycine 19 to serine 26. Positions serine 41 to phenylalanine 49 match the Effector region motif. Residues aspartate 67 to glutamine 71, asparagine 125 to aspartate 128, and serine 155 to alanine 156 contribute to the GTP site. S-geranylgeranyl cysteine attachment occurs at residues cysteine 215 and cysteine 216.

This sequence belongs to the small GTPase superfamily. Rab family.

The protein localises to the cell membrane. Intracellular vesicle trafficking and protein transport. The protein is Ras-related protein RABA5d (RABA5D) of Arabidopsis thaliana (Mouse-ear cress).